A 151-amino-acid chain; its full sequence is Ribosome maturation factor RimP (151 aa).

This sequence belongs to the RimP family.

The protein localises to the cytoplasm. Functionally, required for maturation of 30S ribosomal subunits. This chain is Ribosome maturation factor RimP, found in Nitrosococcus oceani (strain ATCC 19707 / BCRC 17464 / JCM 30415 / NCIMB 11848 / C-107).